The chain runs to 338 residues: MSAVNENNLEGVSETVLTLRKVVVNESEPLARRFRALFSLKYLACLQPPSEDTLPAIEAIAAAFSSKSALLKHELAYCLGQTRNPDAVAFLQQVLKDKEEDVMCRHEAAEALGALGYEDSLEILKALKDDENEPEVIRETCDIAVDRIVWENSEARKAEKLKPSDFTSIDPAPPMPLEAAEPSIPELEKTLLDTKLPLFQRYRAMFALRDLASPPDLPTAVQAVDALAKGLKDPSALFRHEVAFVFGQLCHPASVPSLTECLSNQEEAGMVRHEAAEALGSLGDVEGVEDTLKKFLNDPEQVVRDSIIVALDMAEFEKNGEMEYALVPDSGAPAAVSA.

HEAT-like PBS-type repeat units follow at residues 71 to 97, 104 to 130, 200 to 233, 238 to 264, and 271 to 298; these read LKHELAYCLGQTRNPDAVAFLQQVLKD, CRHEAAEALGALGYEDSLEILKALKDD, QRYRAMFALRDLASPPDLPTAVQAVDALAKGLKD, FRHEVAFVFGQLCHPASVPSLTECLSN, and VRHEAAEALGSLGDVEGVEDTLKKFLND. The Fe cation site is built by H73, E74, H106, and E107. Residues H240, E241, H273, and E274 each contribute to the Fe cation site.

This sequence belongs to the deoxyhypusine hydroxylase family. It depends on Fe(2+) as a cofactor.

The protein localises to the cytoplasm. It is found in the nucleus. The enzyme catalyses [eIF5A protein]-deoxyhypusine + AH2 + O2 = [eIF5A protein]-hypusine + A + H2O. Its pathway is protein modification; eIF5A hypusination. In terms of biological role, catalyzes the hydroxylation of the N(6)-(4-aminobutyl)-L-lysine intermediate to form hypusine, an essential post-translational modification only found in mature eIF-5A factor. This Aspergillus niger (strain ATCC MYA-4892 / CBS 513.88 / FGSC A1513) protein is Deoxyhypusine hydroxylase (lia1).